A 460-amino-acid chain; its full sequence is Chromosomal replication initiator protein DnaA (460 aa).

Positions 1-91 (MNLTSPKVST…SLWQSEDKSI (91 aa)) are domain I, interacts with DnaA modulators. The tract at residues 91–122 (IRSIDIQVIEERNSNFNVILKNREESNHNLGS) is domain II. The segment at 123 to 342 (PLDPRFTFDN…GALNKVTHTS (220 aa)) is domain III, AAA+ region. Positions 169, 171, 172, and 173 each coordinate ATP. Residues 343-460 (LIGRSMTVES…EINRLKKMFK (118 aa)) are domain IV, binds dsDNA.

This sequence belongs to the DnaA family. Oligomerizes as a right-handed, spiral filament on DNA at oriC.

Its subcellular location is the cytoplasm. Functionally, plays an essential role in the initiation and regulation of chromosomal replication. ATP-DnaA binds to the origin of replication (oriC) to initiate formation of the DNA replication initiation complex once per cell cycle. Binds the DnaA box (a 9 base pair repeat at the origin) and separates the double-stranded (ds)DNA. Forms a right-handed helical filament on oriC DNA; dsDNA binds to the exterior of the filament while single-stranded (ss)DNA is stabiized in the filament's interior. The ATP-DnaA-oriC complex binds and stabilizes one strand of the AT-rich DNA unwinding element (DUE), permitting loading of DNA polymerase. After initiation quickly degrades to an ADP-DnaA complex that is not apt for DNA replication. Binds acidic phospholipids. This chain is Chromosomal replication initiator protein DnaA, found in Wolbachia pipientis wMel.